A 309-amino-acid chain; its full sequence is Lactamase-like protein aptB (309 aa).

Residues H97, H99, D101, and H102 each coordinate Zn(2+). Residue D101 is the Proton donor/acceptor of the active site.

It belongs to the metallo-beta-lactamase superfamily. Requires Zn(2+) as cofactor.

The catalysed reaction is 2,3,6,8,9-pentahydroxy-1-oxo-3-(2-oxopropyl)-1,2,3,4-tetrahydroanthracene-2-carboxyl-[ACP] + H2O = 2,3,6,8,9-pentahydroxy-1-oxo-3-(2-oxopropyl)-1,2,3,4-tetrahydroanthracene-2-carboxylate + holo-[ACP] + H(+). It functions in the pathway secondary metabolite biosynthesis. Lactamase-like protein; part of the gene cluster that mediates the biosynthesis of asperthecin, an anthraquinone pigment. Polyketide synthase (PKS) aptA catalyzes the formation of the aromatic polyketide from acetyl coenzyme A and seven malonyl coenzyme A molecules. Polyketide is subsequently hydrolyzed by the action of aptB into endocrocin-9-anthrone. Endocrocin-9-anthrone is then oxidized into endocrocin by aptC. Endocrocin is likely to decarboxylate spontaneously to form emodin which explains why there is no decarboxylase in the asperthecin biosynthesis cluster. Finally, aptC or another endogenous oxygenase catalyzes additional oxidation steps to form asperthecin. The sequence is that of Lactamase-like protein aptB from Emericella nidulans (strain FGSC A4 / ATCC 38163 / CBS 112.46 / NRRL 194 / M139) (Aspergillus nidulans).